Here is an 833-residue protein sequence, read N- to C-terminus: 3-hydroxy-3-methylglutaryl-coenzyme A reductase (833 aa).

The next 4 membrane-spanning stretches (helical) occupy residues F10–V32, Y91–S117, L160–V180, and S301–F321. The linker stretch occupies residues E322–S419. Residues K347–T374 form a disordered region. Polar residues predominate over residues D354 to E365. Residues H420–L833 form a catalytic region. Catalysis depends on charge relay system residues E504 and K635. N680 carries N-linked (GlcNAc...) asparagine glycosylation. Catalysis depends on D711, which acts as the Charge relay system. N715 and N720 each carry an N-linked (GlcNAc...) asparagine glycan. The Proton donor role is filled by H809. Residues N813 and N825 are each glycosylated (N-linked (GlcNAc...) asparagine).

The protein belongs to the HMG-CoA reductase family.

It localises to the endoplasmic reticulum membrane. It carries out the reaction (R)-mevalonate + 2 NADP(+) + CoA = (3S)-3-hydroxy-3-methylglutaryl-CoA + 2 NADPH + 2 H(+). It participates in metabolic intermediate biosynthesis; (R)-mevalonate biosynthesis; (R)-mevalonate from acetyl-CoA: step 3/3. With respect to regulation, the activity of HMG-CoA-reductase is suppressed by exogenous mevalonate. In terms of biological role, synthesis of mevalonate for the production of non-sterol isoprenoids, which are essential for growth differentiation. The protein is 3-hydroxy-3-methylglutaryl-coenzyme A reductase (HMGR) of Agrotis ipsilon (Black cutworm moth).